Reading from the N-terminus, the 537-residue chain is CTP synthase (537 aa).

The interval 1-268 (MGETKYIFVT…DSTILEKMGL (268 aa)) is amidoligase domain. Ser-15 contributes to the CTP binding site. Ser-15 contributes to the UTP binding site. Position 16 to 21 (16 to 21 (SLGKGI)) interacts with ATP. Tyr-56 serves as a coordination point for L-glutamine. Asp-73 is an ATP binding site. Asp-73 and Glu-143 together coordinate Mg(2+). CTP-binding positions include 150-152 (DIE), 189-194 (KTKPTQ), and Lys-225. Residues 189–194 (KTKPTQ) and Lys-225 each bind UTP. Residues 296-537 (NIALVGKYDL…VKAAIENEKN (242 aa)) form the Glutamine amidotransferase type-1 domain. Gly-357 provides a ligand contact to L-glutamine. The active-site Nucleophile; for glutamine hydrolysis is the Cys-384. Residues 385–388 (LGMQ), Glu-408, and Arg-465 contribute to the L-glutamine site. Active-site residues include His-510 and Glu-512.

The protein belongs to the CTP synthase family. In terms of assembly, homotetramer.

The enzyme catalyses UTP + L-glutamine + ATP + H2O = CTP + L-glutamate + ADP + phosphate + 2 H(+). It catalyses the reaction L-glutamine + H2O = L-glutamate + NH4(+). The catalysed reaction is UTP + NH4(+) + ATP = CTP + ADP + phosphate + 2 H(+). The protein operates within pyrimidine metabolism; CTP biosynthesis via de novo pathway; CTP from UDP: step 2/2. Allosterically activated by GTP, when glutamine is the substrate; GTP has no effect on the reaction when ammonia is the substrate. The allosteric effector GTP functions by stabilizing the protein conformation that binds the tetrahedral intermediate(s) formed during glutamine hydrolysis. Inhibited by the product CTP, via allosteric rather than competitive inhibition. Its function is as follows. Catalyzes the ATP-dependent amination of UTP to CTP with either L-glutamine or ammonia as the source of nitrogen. Regulates intracellular CTP levels through interactions with the four ribonucleotide triphosphates. This Bacteroides thetaiotaomicron (strain ATCC 29148 / DSM 2079 / JCM 5827 / CCUG 10774 / NCTC 10582 / VPI-5482 / E50) protein is CTP synthase.